The following is a 173-amino-acid chain: Crossover junction endodeoxyribonuclease RuvC (173 aa).

Catalysis depends on residues D8, E67, and D139. The Mg(2+) site is built by D8, E67, and D139.

It belongs to the RuvC family. In terms of assembly, homodimer which binds Holliday junction (HJ) DNA. The HJ becomes 2-fold symmetrical on binding to RuvC with unstacked arms; it has a different conformation from HJ DNA in complex with RuvA. In the full resolvosome a probable DNA-RuvA(4)-RuvB(12)-RuvC(2) complex forms which resolves the HJ. Mg(2+) serves as cofactor.

Its subcellular location is the cytoplasm. The catalysed reaction is Endonucleolytic cleavage at a junction such as a reciprocal single-stranded crossover between two homologous DNA duplexes (Holliday junction).. In terms of biological role, the RuvA-RuvB-RuvC complex processes Holliday junction (HJ) DNA during genetic recombination and DNA repair. Endonuclease that resolves HJ intermediates. Cleaves cruciform DNA by making single-stranded nicks across the HJ at symmetrical positions within the homologous arms, yielding a 5'-phosphate and a 3'-hydroxyl group; requires a central core of homology in the junction. The consensus cleavage sequence is 5'-(A/T)TT(C/G)-3'. Cleavage occurs on the 3'-side of the TT dinucleotide at the point of strand exchange. HJ branch migration catalyzed by RuvA-RuvB allows RuvC to scan DNA until it finds its consensus sequence, where it cleaves and resolves the cruciform DNA. The protein is Crossover junction endodeoxyribonuclease RuvC of Shewanella pealeana (strain ATCC 700345 / ANG-SQ1).